A 446-amino-acid chain; its full sequence is Maltoporin (446 aa).

An N-terminal signal peptide occupies residues 1 to 25 (MMITLRKLPLAVAVAAGVMSAQAMA).

This sequence belongs to the porin LamB (TC 1.B.3) family. In terms of assembly, homotrimer formed of three 18-stranded antiparallel beta-barrels, containing three independent channels.

It localises to the cell outer membrane. The enzyme catalyses beta-maltose(in) = beta-maltose(out). In terms of biological role, involved in the transport of maltose and maltodextrins. The sequence is that of Maltoporin from Escherichia coli O7:K1 (strain IAI39 / ExPEC).